The chain runs to 96 residues: Small ribosomal subunit protein bS6 (96 aa).

This sequence belongs to the bacterial ribosomal protein bS6 family.

Binds together with bS18 to 16S ribosomal RNA. This chain is Small ribosomal subunit protein bS6, found in Streptococcus mutans serotype c (strain ATCC 700610 / UA159).